The chain runs to 286 residues: Phosphatidylserine decarboxylase proenzyme (286 aa).

Catalysis depends on charge relay system; for autoendoproteolytic cleavage activity residues Asp90, His147, and Ser252. The Schiff-base intermediate with substrate; via pyruvic acid; for decarboxylase activity role is filled by Ser252. At Ser252 the chain carries Pyruvic acid (Ser); by autocatalysis.

This sequence belongs to the phosphatidylserine decarboxylase family. PSD-B subfamily. Prokaryotic type I sub-subfamily. Heterodimer of a large membrane-associated beta subunit and a small pyruvoyl-containing alpha subunit. It depends on pyruvate as a cofactor. Post-translationally, is synthesized initially as an inactive proenzyme. Formation of the active enzyme involves a self-maturation process in which the active site pyruvoyl group is generated from an internal serine residue via an autocatalytic post-translational modification. Two non-identical subunits are generated from the proenzyme in this reaction, and the pyruvate is formed at the N-terminus of the alpha chain, which is derived from the carboxyl end of the proenzyme. The autoendoproteolytic cleavage occurs by a canonical serine protease mechanism, in which the side chain hydroxyl group of the serine supplies its oxygen atom to form the C-terminus of the beta chain, while the remainder of the serine residue undergoes an oxidative deamination to produce ammonia and the pyruvoyl prosthetic group on the alpha chain. During this reaction, the Ser that is part of the protease active site of the proenzyme becomes the pyruvoyl prosthetic group, which constitutes an essential element of the active site of the mature decarboxylase.

It is found in the cell membrane. It carries out the reaction a 1,2-diacyl-sn-glycero-3-phospho-L-serine + H(+) = a 1,2-diacyl-sn-glycero-3-phosphoethanolamine + CO2. The protein operates within phospholipid metabolism; phosphatidylethanolamine biosynthesis; phosphatidylethanolamine from CDP-diacylglycerol: step 2/2. Its function is as follows. Catalyzes the formation of phosphatidylethanolamine (PtdEtn) from phosphatidylserine (PtdSer). The sequence is that of Phosphatidylserine decarboxylase proenzyme from Pseudomonas fluorescens (strain SBW25).